A 292-amino-acid chain; its full sequence is Enoyl-CoA hydratase domain-containing protein 2, mitochondrial (292 aa).

The transit peptide at 1–35 (MLRVLCLLRPWRPLRARGCASDGAAGGSEIQVRAL) directs the protein to the mitochondrion. K97 carries the N6-acetyllysine; alternate modification. K97 bears the N6-succinyllysine; alternate mark.

It belongs to the enoyl-CoA hydratase/isomerase family.

It localises to the mitochondrion. In Homo sapiens (Human), this protein is Enoyl-CoA hydratase domain-containing protein 2, mitochondrial (ECHDC2).